The primary structure comprises 191 residues: Protein GrpE (191 aa).

Belongs to the GrpE family. In terms of assembly, homodimer.

The protein localises to the cytoplasm. In terms of biological role, participates actively in the response to hyperosmotic and heat shock by preventing the aggregation of stress-denatured proteins, in association with DnaK and GrpE. It is the nucleotide exchange factor for DnaK and may function as a thermosensor. Unfolded proteins bind initially to DnaJ; upon interaction with the DnaJ-bound protein, DnaK hydrolyzes its bound ATP, resulting in the formation of a stable complex. GrpE releases ADP from DnaK; ATP binding to DnaK triggers the release of the substrate protein, thus completing the reaction cycle. Several rounds of ATP-dependent interactions between DnaJ, DnaK and GrpE are required for fully efficient folding. This chain is Protein GrpE, found in Listeria welshimeri serovar 6b (strain ATCC 35897 / DSM 20650 / CCUG 15529 / CIP 8149 / NCTC 11857 / SLCC 5334 / V8).